The sequence spans 202 residues: Large ribosomal subunit protein bL25 (202 aa).

The protein belongs to the bacterial ribosomal protein bL25 family. CTC subfamily. In terms of assembly, part of the 50S ribosomal subunit; part of the 5S rRNA/L5/L18/L25 subcomplex. Contacts the 5S rRNA. Binds to the 5S rRNA independently of L5 and L18.

Its function is as follows. This is one of the proteins that binds to the 5S RNA in the ribosome where it forms part of the central protuberance. In Paramagnetospirillum magneticum (strain ATCC 700264 / AMB-1) (Magnetospirillum magneticum), this protein is Large ribosomal subunit protein bL25.